Here is a 494-residue protein sequence, read N- to C-terminus: Glutamate--tRNA ligase (494 aa).

The 'HIGH' region signature appears at 10–20; that stretch reads PSPTGDPHVGT. Zn(2+) contacts are provided by cysteine 107, cysteine 109, cysteine 134, and histidine 136. The 'KMSKS' region signature appears at 251–255; it reads KLSKR. Lysine 254 contacts ATP.

It belongs to the class-I aminoacyl-tRNA synthetase family. Glutamate--tRNA ligase type 1 subfamily. As to quaternary structure, monomer. The cofactor is Zn(2+).

The protein resides in the cytoplasm. The enzyme catalyses tRNA(Glu) + L-glutamate + ATP = L-glutamyl-tRNA(Glu) + AMP + diphosphate. Functionally, catalyzes the attachment of glutamate to tRNA(Glu) in a two-step reaction: glutamate is first activated by ATP to form Glu-AMP and then transferred to the acceptor end of tRNA(Glu). This is Glutamate--tRNA ligase from Pseudomonas paraeruginosa (strain DSM 24068 / PA7) (Pseudomonas aeruginosa (strain PA7)).